Reading from the N-terminus, the 143-residue chain is Large ribosomal subunit protein uL15 (143 aa).

Basic residues-rich tracts occupy residues 1–13 and 23–38; these read MIRKSKKITKMRG and KKHRGAGHRGGRGNAG. Residues 1–38 are disordered; it reads MIRKSKKITKMRGSRTCGYGEAKKHRGAGHRGGRGNAG.

This sequence belongs to the universal ribosomal protein uL15 family. Part of the 50S ribosomal subunit.

Binds to the 23S rRNA. In Methanococcus maripaludis (strain C5 / ATCC BAA-1333), this protein is Large ribosomal subunit protein uL15.